Reading from the N-terminus, the 202-residue chain is MKLLFDLFPVILFFATFKYAEKSPELAASWMGSLLGFVPDDIKLAPILLATVVVIAATVAQIIWVHFRHGKVDKMLWVSLVLVVVFGGLTLAFQNEAFIKWKPTILYWVFAGSMIFSAFILKKNPIKAMLGEQLTLPEPVWGKVNLSWIGFFLFMGALNLFVAFNFPTDTWVNFKLFGGMGLMLVFVLGQGMLLSKYVEEEK.

The next 5 membrane-spanning stretches (helical) occupy residues 47 to 67, 75 to 95, 101 to 121, 146 to 166, and 174 to 194; these read ILLA…WVHF, MLWV…AFQN, WKPT…AFIL, LSWI…AFNF, and FKLF…GMLL.

It belongs to the YciB family.

Its subcellular location is the cell inner membrane. Functionally, plays a role in cell envelope biogenesis, maintenance of cell envelope integrity and membrane homeostasis. The protein is Inner membrane-spanning protein YciB of Dechloromonas aromatica (strain RCB).